Consider the following 342-residue polypeptide: MTSILSPEKSQNDQELPLRPSYLQEFVGQQQIKENLSVFIRAAKSRGEHLDHTLFYGPPGLGKTTLAKIISNEIGGNFKSTSGPAILKAADLAAILTNLEKNDVLFIDEIHRLNTSVEEVLYPAMEDFELDIIIGEGPAARSVKINLPQFTLIGATTRLGLLSNPLRDRFGIPMRLNFYNTEELKKVLNRASKLLDIDLTDSGSEEIARRSRGTPRIALRLLRRIRDFAAVNNQLEIDKEIANFGLNRLEVDIIGLDSNDYRYLKFIADNYNGGPVGIETIAAALSEQRDALEETIEPYLIQIGLLQRTPRGRVITATAFEHLKIPLPTSPTHQFNIFNDNE.

Residues 1–179 (MTSILSPEKS…FGIPMRLNFY (179 aa)) form a large ATPase domain (RuvB-L) region. ATP-binding positions include Leu-18, Arg-19, Gly-60, Lys-63, Thr-64, Thr-65, 126–128 (EDF), Arg-169, Tyr-179, and Arg-216. Residue Thr-64 participates in Mg(2+) binding. Residues 180–250 (NTEELKKVLN…IANFGLNRLE (71 aa)) form a small ATPAse domain (RuvB-S) region. Residues 253–342 (IIGLDSNDYR…HQFNIFNDNE (90 aa)) form a head domain (RuvB-H) region. DNA-binding residues include Arg-289, Arg-308, and Arg-313.

It belongs to the RuvB family. As to quaternary structure, homohexamer. Forms an RuvA(8)-RuvB(12)-Holliday junction (HJ) complex. HJ DNA is sandwiched between 2 RuvA tetramers; dsDNA enters through RuvA and exits via RuvB. An RuvB hexamer assembles on each DNA strand where it exits the tetramer. Each RuvB hexamer is contacted by two RuvA subunits (via domain III) on 2 adjacent RuvB subunits; this complex drives branch migration. In the full resolvosome a probable DNA-RuvA(4)-RuvB(12)-RuvC(2) complex forms which resolves the HJ.

It localises to the cytoplasm. The enzyme catalyses ATP + H2O = ADP + phosphate + H(+). Its function is as follows. The RuvA-RuvB-RuvC complex processes Holliday junction (HJ) DNA during genetic recombination and DNA repair, while the RuvA-RuvB complex plays an important role in the rescue of blocked DNA replication forks via replication fork reversal (RFR). RuvA specifically binds to HJ cruciform DNA, conferring on it an open structure. The RuvB hexamer acts as an ATP-dependent pump, pulling dsDNA into and through the RuvAB complex. RuvB forms 2 homohexamers on either side of HJ DNA bound by 1 or 2 RuvA tetramers; 4 subunits per hexamer contact DNA at a time. Coordinated motions by a converter formed by DNA-disengaged RuvB subunits stimulates ATP hydrolysis and nucleotide exchange. Immobilization of the converter enables RuvB to convert the ATP-contained energy into a lever motion, pulling 2 nucleotides of DNA out of the RuvA tetramer per ATP hydrolyzed, thus driving DNA branch migration. The RuvB motors rotate together with the DNA substrate, which together with the progressing nucleotide cycle form the mechanistic basis for DNA recombination by continuous HJ branch migration. Branch migration allows RuvC to scan DNA until it finds its consensus sequence, where it cleaves and resolves cruciform DNA. The protein is Holliday junction branch migration complex subunit RuvB of Rickettsia bellii (strain RML369-C).